Reading from the N-terminus, the 103-residue chain is Small ribosomal subunit protein uS10 (103 aa).

The protein belongs to the universal ribosomal protein uS10 family. Part of the 30S ribosomal subunit.

Involved in the binding of tRNA to the ribosomes. The chain is Small ribosomal subunit protein uS10 from Polynucleobacter asymbioticus (strain DSM 18221 / CIP 109841 / QLW-P1DMWA-1) (Polynucleobacter necessarius subsp. asymbioticus).